The primary structure comprises 564 residues: MFS-type transporter astH (564 aa).

N23 is a glycosylation site (N-linked (GlcNAc...) asparagine). A disordered region spans residues 26–59 (KDTLVNCSPDPENPEKGQASSPRTQISVDDNEES). Residues 43–53 (QASSPRTQISV) are compositionally biased toward polar residues. 4 helical membrane passes run 69–89 (LAMIMISLCLAVFCLALDTTI), 106–126 (DVGWYGSAYLLTTSALTLSFG), 143–163 (GMFEIGSLICGATPNSLGLII), and 197–217 (GILGGLFGVASVVGPLIGGAF). N-linked (GlcNAc...) asparagine glycosylation occurs at N220. Transmembrane regions (helical) follow at residues 225–245 (WCFYINLPLGAVTGLFLILFF), 266–286 (LLGSLCFLPAIICVLLALQWG), 297–317 (IIALFTVFGVLLLAFAGVQWW), 339–359 (LFSFCLNASFIIFTYYLPMWF), 375–395 (LPMVLAVVIFSIISGGLVGAL), and 396–416 (GYYTPFMVIAPLIAAIGAGLL). An N-linked (GlcNAc...) asparagine glycan is attached at N425. The next 2 helical transmembrane spans lie at 461–481 (TGTVIVMFMQTIGGAIFMSVG) and 537–557 (FYVAVAMAVLALPGALVMQWI).

This sequence belongs to the major facilitator superfamily. TCR/Tet family.

Its subcellular location is the membrane. Its function is as follows. MFS-type transporter; part of the gene cluster that mediates the biosynthesis of astellolides, drimane-type sesquiterpene esters that show antimicrobial, anti-inflammatory, and anti-tumor activities. Seems not to be involved in astellolides translocation. The chain is MFS-type transporter astH from Aspergillus oryzae (strain ATCC 42149 / RIB 40) (Yellow koji mold).